The following is an 831-amino-acid chain: Glucan 1,3-beta-glucosidase D (831 aa).

Residues 1 to 21 (MPSQSRSRDRYGRDSDRDRSR) are compositionally biased toward basic and acidic residues. Disordered regions lie at residues 1–246 (MPSQ…RGQS) and 261–288 (APDM…SDGS). At 1 to 300 (MPSQSRSRDR…LTPFWKRKKW (300 aa)) the chain is on the cytoplasmic side. Positions 32 to 41 (EDDDDDDDFD) are enriched in acidic residues. Composition is skewed to basic and acidic residues over residues 42 to 70 (DNPR…HDDY), 78 to 94 (EPRR…ERAR), and 151 to 177 (DAAR…HKST). Low complexity predominate over residues 178-195 (DSSNSSAGLLNANALAKL). 2 stretches are compositionally biased toward basic and acidic residues: residues 197-216 (AQHE…EAKA) and 275-286 (PPRERRWEKDSD). The chain crosses the membrane as a helical; Signal-anchor for type II membrane protein span at residues 301 to 321 (WWIGAIVLVIVVIIIVVAVVV). Residues 322–831 (SNNKKSDSDS…PSFGNLPEYY (510 aa)) are Extracellular-facing. The segment at 325–360 (KKSDSDSDSDSNSGSSDSWGGDKSSLNGLDHDSIPK) is disordered. Residues 334–350 (DSNSGSSDSWGGDKSSL) show a composition bias toward low complexity. 3 N-linked (GlcNAc...) asparagine glycosylation sites follow: asparagine 379, asparagine 396, and asparagine 547. The active-site Proton donor is glutamate 598. 4 N-linked (GlcNAc...) asparagine glycosylation sites follow: asparagine 611, asparagine 637, asparagine 670, and asparagine 690. Glutamate 703 serves as the catalytic Nucleophile.

The protein belongs to the glycosyl hydrolase 5 (cellulase A) family.

It localises to the cell membrane. The enzyme catalyses Successive hydrolysis of beta-D-glucose units from the non-reducing ends of (1-&gt;3)-beta-D-glucans, releasing alpha-glucose.. Functionally, glucosidase involved in the degradation of cellulosic biomass. Active on lichenan. The sequence is that of Glucan 1,3-beta-glucosidase D (exgD) from Emericella nidulans (strain FGSC A4 / ATCC 38163 / CBS 112.46 / NRRL 194 / M139) (Aspergillus nidulans).